A 269-amino-acid polypeptide reads, in one-letter code: 4-hydroxy-tetrahydrodipicolinate reductase (269 aa).

NAD(+)-binding positions include 11 to 16 and Glu-37; that span reads GASGRM. Arg-38 lines the NADP(+) pocket. NAD(+) is bound by residues 101–103 and 125–128; these read GTT and AGNM. Catalysis depends on His-158, which acts as the Proton donor/acceptor. His-159 contributes to the (S)-2,3,4,5-tetrahydrodipicolinate binding site. The active-site Proton donor is Lys-162. 168–169 serves as a coordination point for (S)-2,3,4,5-tetrahydrodipicolinate; sequence GT.

This sequence belongs to the DapB family.

The protein resides in the cytoplasm. It carries out the reaction (S)-2,3,4,5-tetrahydrodipicolinate + NAD(+) + H2O = (2S,4S)-4-hydroxy-2,3,4,5-tetrahydrodipicolinate + NADH + H(+). It catalyses the reaction (S)-2,3,4,5-tetrahydrodipicolinate + NADP(+) + H2O = (2S,4S)-4-hydroxy-2,3,4,5-tetrahydrodipicolinate + NADPH + H(+). Its pathway is amino-acid biosynthesis; L-lysine biosynthesis via DAP pathway; (S)-tetrahydrodipicolinate from L-aspartate: step 4/4. Catalyzes the conversion of 4-hydroxy-tetrahydrodipicolinate (HTPA) to tetrahydrodipicolinate. This Cereibacter sphaeroides (strain ATCC 17029 / ATH 2.4.9) (Rhodobacter sphaeroides) protein is 4-hydroxy-tetrahydrodipicolinate reductase.